An 841-amino-acid polypeptide reads, in one-letter code: Tax1-binding protein 1 homolog (841 aa).

2 coiled-coil regions span residues 173 to 560 (TTVL…EKAR) and 612 to 640 (YSIE…KQAG). The disordered stretch occupies residues 419 to 441 (MRDEQQQKSNPFAKKDQGADNNR). The segment covering 431–441 (AKKDQGADNNR) has biased composition (basic and acidic residues). Residues 678 to 759 (YASQETRDGA…NVNFEQTPDP (82 aa)) form a disordered region. Positions 741–751 (DEDDDDDDDNV) are enriched in acidic residues. 2 consecutive UBZ1-type zinc fingers follow at residues 779–805 (NKKC…VESH) and 806–832 (WKVC…VQTH). Cys782, Cys785, His801, His805, Cys809, Cys812, His828, and His832 together coordinate Zn(2+).

Functionally, may have an anti-apoptotic activity. This chain is Tax1-binding protein 1 homolog (tax1bp1), found in Xenopus tropicalis (Western clawed frog).